Here is a 636-residue protein sequence, read N- to C-terminus: Putative cysteine-rich receptor-like protein kinase 33 (636 aa).

Positions 1–25 are cleaved as a signal peptide; it reads MRKTKKISFLIFWVVLISIIGAISS. Gnk2-homologous domains follow at residues 26 to 128 and 138 to 245; these read QQCN…NSSF and YMEH…LYPF. Residues 26 to 266 are Extracellular-facing; the sequence is QQCNETGYFE…PGSKRNISVG (241 aa). N-linked (GlcNAc...) asparagine glycans are attached at residues Asn-29, Asn-63, Asn-105, Asn-125, Asn-149, Asn-173, Asn-185, Asn-188, Asn-250, and Asn-262. Residues 267–287 form a helical membrane-spanning segment; it reads FFVAIVVATGVVISVLSTLVV. At 288-636 the chain is on the cytoplasmic side; the sequence is VLVCRKRKTD…DSLIDDLVPR (349 aa). One can recognise a Protein kinase domain in the interval 321 to 600; it reads FSKCNMLGQG…MMLTSNSITL (280 aa). ATP is bound by residues 327–335 and Lys-349; that span reads LGQGGFGEV. Tyr-394 carries the post-translational modification Phosphotyrosine. Residue Asp-446 is the Proton acceptor of the active site. Ser-450 is modified (phosphoserine). Thr-486 is subject to Phosphothreonine. Tyr-494 carries the post-translational modification Phosphotyrosine.

This sequence belongs to the protein kinase superfamily. Ser/Thr protein kinase family. CRK subfamily.

The protein resides in the membrane. The enzyme catalyses L-seryl-[protein] + ATP = O-phospho-L-seryl-[protein] + ADP + H(+). It carries out the reaction L-threonyl-[protein] + ATP = O-phospho-L-threonyl-[protein] + ADP + H(+). The chain is Putative cysteine-rich receptor-like protein kinase 33 (CRK33) from Arabidopsis thaliana (Mouse-ear cress).